Here is a 216-residue protein sequence, read N- to C-terminus: Adenylate kinase (216 aa).

Residue 10–15 (GAGKGT) participates in ATP binding. Residues 30-59 (STGDMIRETIKSDSEIGKELKKVLDAGQLV) are NMP. Residues Thr31, Arg36, 57 to 59 (QLV), and Gln92 contribute to the AMP site. Positions 122–159 (GRRVHPASGRTYHTKFNPPKVEGKDDITGEDLITRTDD) are LID. Residues Arg123 and 132-133 (TY) each bind ATP. Positions 156 and 167 each coordinate AMP. Residue Gln202 participates in ATP binding.

Belongs to the adenylate kinase family. In terms of assembly, monomer.

The protein localises to the cytoplasm. It carries out the reaction AMP + ATP = 2 ADP. It participates in purine metabolism; AMP biosynthesis via salvage pathway; AMP from ADP: step 1/1. Its function is as follows. Catalyzes the reversible transfer of the terminal phosphate group between ATP and AMP. Plays an important role in cellular energy homeostasis and in adenine nucleotide metabolism. The chain is Adenylate kinase from Francisella philomiragia subsp. philomiragia (strain ATCC 25017 / CCUG 19701 / FSC 153 / O#319-036).